Here is a 113-residue protein sequence, read N- to C-terminus: MAGPAAAFRRLGALSGAAALGFASYGAHGAQFPDAYGKELFDKANKHHFLHSLALLGVPHCRKPLWAGLLLASGTTLFCTSFYYQALSGDPSIQTLAPAGGTLLLLGWLALAL.

Positions 1–29 (MAGPAAAFRRLGALSGAAALGFASYGAHG) are cleaved as a signal peptide. At 30–63 (AQFPDAYGKELFDKANKHHFLHSLALLGVPHCRK) the chain is on the extracellular side. At lysine 43 the chain carries N6-acetyllysine. A helical transmembrane segment spans residues 64 to 84 (PLWAGLLLASGTTLFCTSFYY). Residues 85–92 (QALSGDPS) lie on the Cytoplasmic side of the membrane. The helical transmembrane segment at 93–113 (IQTLAPAGGTLLLLGWLALAL) threads the bilayer.

This sequence belongs to the TMEM256 family.

It is found in the membrane. The polypeptide is Transmembrane protein 256 (TMEM256) (Homo sapiens (Human)).